Reading from the N-terminus, the 273-residue chain is UPF0380 protein YfjQ (273 aa).

The protein belongs to the UPF0380 family.

The chain is UPF0380 protein YfjQ (yfjQ) from Escherichia coli (strain K12).